The sequence spans 148 residues: Aspartate carbamoyltransferase regulatory chain (148 aa).

Zn(2+)-binding residues include Cys106, Cys111, Cys134, and Cys137.

It belongs to the PyrI family. Contains catalytic and regulatory chains. It depends on Zn(2+) as a cofactor.

In terms of biological role, involved in allosteric regulation of aspartate carbamoyltransferase. The polypeptide is Aspartate carbamoyltransferase regulatory chain (Methanococcus maripaludis (strain C7 / ATCC BAA-1331)).